Consider the following 163-residue polypeptide: NADH-quinone oxidoreductase subunit I (163 aa).

4Fe-4S ferredoxin-type domains are found at residues 53 to 83 (LRRY…IEAG) and 94 to 123 (VRYD…EGPN). C63, C66, C69, C73, C103, C106, C109, and C113 together coordinate [4Fe-4S] cluster.

This sequence belongs to the complex I 23 kDa subunit family. NDH-1 is composed of 14 different subunits. Subunits NuoA, H, J, K, L, M, N constitute the membrane sector of the complex. [4Fe-4S] cluster serves as cofactor.

The protein resides in the cell inner membrane. It carries out the reaction a quinone + NADH + 5 H(+)(in) = a quinol + NAD(+) + 4 H(+)(out). In terms of biological role, NDH-1 shuttles electrons from NADH, via FMN and iron-sulfur (Fe-S) centers, to quinones in the respiratory chain. The immediate electron acceptor for the enzyme in this species is believed to be ubiquinone. Couples the redox reaction to proton translocation (for every two electrons transferred, four hydrogen ions are translocated across the cytoplasmic membrane), and thus conserves the redox energy in a proton gradient. This chain is NADH-quinone oxidoreductase subunit I, found in Bartonella quintana (strain Toulouse) (Rochalimaea quintana).